The following is a 156-amino-acid chain: Probable cyclic pyranopterin monophosphate synthase (156 aa).

Position 109-110 (Met-109–Asp-110) interacts with substrate. Asp-124 is a catalytic residue.

It belongs to the MoaC family. Homohexamer; trimer of dimers.

The enzyme catalyses (8S)-3',8-cyclo-7,8-dihydroguanosine 5'-triphosphate = cyclic pyranopterin phosphate + diphosphate. The protein operates within cofactor biosynthesis; molybdopterin biosynthesis. Functionally, catalyzes the conversion of (8S)-3',8-cyclo-7,8-dihydroguanosine 5'-triphosphate to cyclic pyranopterin monophosphate (cPMP). This chain is Probable cyclic pyranopterin monophosphate synthase, found in Methanopyrus kandleri (strain AV19 / DSM 6324 / JCM 9639 / NBRC 100938).